We begin with the raw amino-acid sequence, 538 residues long: Protein BFR2 (538 aa).

Positions 1–239 (MVKAKGRAKE…AKPMMAALST (239 aa)) are disordered. Residues 7–23 (RAKEFQDPDEPITKDYD) show a composition bias toward basic and acidic residues. Composition is skewed to acidic residues over residues 80–105 (LEEE…PETA) and 172–222 (DSED…DEED). Residues 290–363 (YEAAEEAAIK…KWSRKVQSVN (74 aa)) are a coiled coil.

This sequence belongs to the AATF family.

It is found in the nucleus. It localises to the nucleolus. This chain is Protein BFR2 (BFR2), found in Gibberella zeae (strain ATCC MYA-4620 / CBS 123657 / FGSC 9075 / NRRL 31084 / PH-1) (Wheat head blight fungus).